The primary structure comprises 426 residues: Elongation factor Tu, mitochondrial (426 aa).

Residues 1-27 (MFKNLAGSFRAVSRVAFKTRPSLVRSY) constitute a mitochondrion transit peptide. The region spanning 34-230 (KPHVNIGTIG…AVDEHIPTPT (197 aa)) is the tr-type G domain. The tract at residues 43–50 (GHVDHGKT) is G1. GTP is bound at residue 43–50 (GHVDHGKT). A G2 region spans residues 84–88 (GITIS). The interval 105-108 (DCPG) is G3. GTP is bound by residues 105–109 (DCPGH) and 160–163 (NKVD). The interval 160 to 163 (NKVD) is G4. Residues 198–200 (SAL) form a G5 region.

Belongs to the TRAFAC class translation factor GTPase superfamily. Classic translation factor GTPase family. EF-Tu/EF-1A subfamily.

It localises to the mitochondrion. It functions in the pathway protein biosynthesis; polypeptide chain elongation. G-protein that, in its active GTP-bound form, binds to and delivers aminoacyl-tRNA to the A-site of ribosomes during protein biosynthesis. In the presence of a correct codon-anticodon match between the aminoacyl-tRNA and the A-site codon of the ribosome-bound mRNA, the ribosome acts as a GTPase activator and the GTP is hydrolyzed. The inactive GDP-bound form leaves the ribosome and must be recycled before binding another molecule of aminoacyl-tRNA. Required for mitochondrial protein biosynthesis and maintenance of mitochondrial DNA. This Meyerozyma guilliermondii (strain ATCC 6260 / CBS 566 / DSM 6381 / JCM 1539 / NBRC 10279 / NRRL Y-324) (Yeast) protein is Elongation factor Tu, mitochondrial (TUF1).